The sequence spans 187 residues: Large ribosomal subunit protein bL9 (187 aa).

Residues 168-187 (EEAPAEEDVAAEETSEAAEA) form a disordered region.

It belongs to the bacterial ribosomal protein bL9 family.

In terms of biological role, binds to the 23S rRNA. The sequence is that of Large ribosomal subunit protein bL9 from Paramagnetospirillum magneticum (strain ATCC 700264 / AMB-1) (Magnetospirillum magneticum).